Here is a 499-residue protein sequence, read N- to C-terminus: Probable alginate O-acetylase AlgI (499 aa).

The next 11 membrane-spanning stretches (helical) occupy residues V7 to A25, Y40 to G62, W78 to V100, F115 to I137, N150 to F172, L239 to F261, I312 to W334, I354 to F373, V380 to S397, L407 to A429, and V475 to F497. Residue H322 is part of the active site.

The protein belongs to the membrane-bound acyltransferase family.

The protein resides in the cell inner membrane. It functions in the pathway glycan biosynthesis; alginate biosynthesis. Functionally, together with AlgJ and AlgF, forms an inner membrane complex which probably interacts with the alginate polymerization-transport complex and adds acetyl groups at the O-2 and O-3 positions of mannuronate residues. Acetylation of alginate increases cyst resistance to desiccation. The polypeptide is Probable alginate O-acetylase AlgI (algI) (Azotobacter vinelandii).